Reading from the N-terminus, the 764-residue chain is MVSLRSRKVIPASEMVSDGKTEKDASGDSPTSVLNEEENCEEKSVTVVEEEILLAKNGDSSLISEAMAQEEEQLLKLREDEEKANNAGSAVAPNLNETQFTKLDELLTQTQLYSEFLLEKMEDITINGIESESQKAEPEKTGRGRKRKAASQYNNTKAKRAVAAMISRSKEDGETINSDLTEEETVIKLQNELCPLLTGGQLKSYQLKGVKWLISLWQNGLNGILADQMGLGKTIQTIGFLSHLKGNGLDGPYLVIAPLSTLSNWFNEIARFTPSINAIIYHGDKNQRDELRRKHMPKTVGPKFPIVITSYEVAMNDAKRILRHYPWKYVVIDEGHRLKNHKCKLLRELKHLKMDNKLLLTGTPLQNNLSELWSLLNFILPDIFTSHDEFESWFDFSEKNKNEATKEEEEKRRAQVVSKLHGILRPFILRRMKCDVELSLPRKKEIIMYATMTDHQKKFQEHLVNNTLEAHLGENAIRGQGWKGKLNNLVIQLRKNCNHPDLLQGQIDGSYLYPPVEEIVGQCGKFRLLERLLVRLFANNHKVLIFSQWTKLLDIMDYYFSEKGFEVCRIDGSVKLDERRRQIKDFSDEKSSCSIFLLSTRAGGLGINLTAADTCILYDSDWNPQMDLQAMDRCHRIGQTKPVHVYRLSTAQSIETRVLKRAYSKLKLEHVVIGQGQFHQERAKSSTPLEEEDILALLKEDETAEDKLIQTDISDADLDRLLDRSDLTITAPGETQAAEAFPVKGPGWEVVLPSSGGMLSSLNS.

The tract at residues 1 to 42 (MVSLRSRKVIPASEMVSDGKTEKDASGDSPTSVLNEEENCEE) is disordered. Residues 17 to 26 (SDGKTEKDAS) show a composition bias toward basic and acidic residues. Residues 62–88 (LISEAMAQEEEQLLKLREDEEKANNAG) are a coiled coil. Residues 129 to 152 (IESESQKAEPEKTGRGRKRKAASQ) form a disordered region. A compositionally biased stretch (basic and acidic residues) spans 132 to 142 (ESQKAEPEKTG). A Nuclear localization signal 1 motif is present at residues 145-152 (RKRKAASQ). One can recognise a Helicase ATP-binding domain in the interval 214-382 (ISLWQNGLNG…WSLLNFILPD (169 aa)). Residue 227 to 234 (DQMGLGKT) coordinates ATP. A DEAH box motif is present at residues 333-336 (DEGH). The short motif at 429-436 (LRRMKCDV) is the Nuclear localization signal 2 element. Positions 528-695 (LLERLLVRLF…STPLEEEDIL (168 aa)) constitute a Helicase C-terminal domain.

Belongs to the SNF2/RAD54 helicase family. As to quaternary structure, interacts with the MBD domains of MBD2, MBD5 and MBD6.

Its subcellular location is the nucleus. It carries out the reaction ATP + H2O = ADP + phosphate + H(+). Its activity is regulated as follows. ATPase activity is stimulated 3-fold by DNA (both free and nucleosomal) binding. ATP-dependent DNA helicase that plays a role in formation, organization, stability and heritability of heterochromatin and thus regulates several physiological traits. Binds to the nucleosome and promotes chromatin remodeling in an ATP-dependent manner; induces nucleosome repositioning on a short DNA fragment, and, possibly, could be guided to target sites (including silent transposable elements) by small interfering RNAs (siRNAs). Can bind both free and nucleosomal DNA. Required for the heritable maintenance of genome integrity and transcriptional gene silencing (TGS), including homology-dependent gene silencing (HDG silencing), via the maintenance of DNA methylation (mostly on cytosine, in both CpG and CpHpG sites, where H is A, T or C) and of histone methylation (e.g. chromatin methylation). May facilitate localization of MBD proteins at specific nuclear domains. Necessary for the maintenance of the genomic imprint at the MEA locus, especially for the silencing of paternally inherited MEA locus. Plays a major role in the inactivation maintenance of retrotransposons (e.g. Tar17, SINE, LINE, ATLN39, CAC1 (CACTAs), Athila elements, and mutator-like elements MULEs and TIR-MULEs) and the silencing of repeated genes and transgenes (e.g. T-DNA insertions). Required for KYP-dependent histone H3 'Lys-9' (H3K9me) methylation, deacetylation of histone H4 'Lys-16' (H4K16) and MET1-dependent DNA methylation. Involved in the chromatin organization of 5S rRNA genes (localized in the pericentromeric heterochromatin of chromosomes 3, 4, and 5) modifications during heterochromatin establishment. Prevents siRNA accumulation (siRNA are probably involved in epigenetic inheritance and in 5S rRNA genes regulation by silencing). Required during plant organogenesis and development, as well as during seed formation. The chain is ATP-dependent DNA helicase DDM1 (DDM1) from Arabidopsis thaliana (Mouse-ear cress).